The chain runs to 291 residues: uncharacterized protein (291 aa).

Solcar repeat units follow at residues 15–93 (PGPV…IKKS), 104–190 (PRTV…IKQS), and 201–287 (LSTV…VMEI). The next 6 helical transmembrane spans lie at 21–41 (IIAGGVAGAIEISITYPAEFA), 70–90 (STVIVGNSLKAAVRFFAFDSI), 108–128 (LAGLGAGVAESVLVLTPFESI), 169–189 (TVARQAANSGVRFTAYNSIKQ), 201–221 (LSTVTTFLVGSVAGIITVYCT), and 259–280 (FWSGATPRLARLILSGGIVFTV).

This sequence belongs to the mitochondrial carrier (TC 2.A.29) family.

The protein resides in the mitochondrion inner membrane. This is an uncharacterized protein from Schizosaccharomyces pombe (strain 972 / ATCC 24843) (Fission yeast).